A 461-amino-acid polypeptide reads, in one-letter code: Cysteine--tRNA ligase (461 aa).

Cysteine 29 serves as a coordination point for Zn(2+). A 'HIGH' region motif is present at residues 31 to 41 (MTIYDLCHVGH). Zn(2+) is bound by residues cysteine 213, histidine 238, and glutamate 242. Residues 274–278 (KMSKS) carry the 'KMSKS' region motif. Residue lysine 277 coordinates ATP.

It belongs to the class-I aminoacyl-tRNA synthetase family. As to quaternary structure, monomer. Requires Zn(2+) as cofactor.

Its subcellular location is the cytoplasm. It carries out the reaction tRNA(Cys) + L-cysteine + ATP = L-cysteinyl-tRNA(Cys) + AMP + diphosphate. This chain is Cysteine--tRNA ligase, found in Methylibium petroleiphilum (strain ATCC BAA-1232 / LMG 22953 / PM1).